A 322-amino-acid chain; its full sequence is Nodulation protein D 1 (322 aa).

The HTH lysR-type domain maps to 6–63 (LDLNLLVALDALMTERKLTAAARSINLSQPAMSAAITRLRTYFRDELFTMNGRELVPT). Residues 23–42 (LTAAARSINLSQPAMSAAIT) constitute a DNA-binding region (H-T-H motif).

This sequence belongs to the LysR transcriptional regulatory family.

Its function is as follows. Regulates the expression of the nod abcFE genes which encode other nodulation proteins. NodD is also a negative regulator of its own expression. Binds flavonoids as inducers. The protein is Nodulation protein D 1 (nodD1) of Sinorhizobium fredii (strain NBRC 101917 / NGR234).